The primary structure comprises 153 residues: Ribonuclease K6 (153 aa).

Residues 1–27 (MVVDLPRYLPLLLLLELWEPMYLLCSQ) form the signal peptide. Catalysis depends on H41, which acts as the Proton acceptor. 4 disulfide bridges follow: C49-C107, C63-C117, C81-C132, and C88-C95. The N-linked (GlcNAc...) asparagine glycan is linked to N58. 64–68 (KQINT) is a substrate binding site. N85 carries an N-linked (GlcNAc...) asparagine glycan. K89 contributes to the substrate binding site. H148 serves as the catalytic Proton donor.

This sequence belongs to the pancreatic ribonuclease family. In terms of assembly, interacts (via N-terminus) with bacterial lipopolysaccharide (LPS). As to expression, highly expressed in spleen (at protein level). Has little or no expression in healthy kidneys (at protein level). Detected at high levels in infected kidneys (at protein level). Expressed at low levels in bladder. Also detected in skeletal muscle, heart and bone marrow.

Its subcellular location is the secreted. It localises to the lysosome. It is found in the cytoplasmic granule. In terms of biological role, ribonuclease which shows a preference for the pyrimidines uridine and cytosine. Has potent antibacterial activity against a range of Gram-positive and Gram-negative bacteria, including P.aeruginosa, A.baumanii, M.luteus, S.aureus, E.faecalis, E.faecium, S.saprophyticus and E.coli. Causes loss of bacterial membrane integrity, and also promotes agglutination of Gram-negative bacteria. Probably contributes to urinary tract sterility. Bactericidal activity is independent of RNase activity. The sequence is that of Ribonuclease K6 (Rnase6) from Mus musculus (Mouse).